A 232-amino-acid chain; its full sequence is 5'-methylthioadenosine/S-adenosylhomocysteine nucleosidase (232 aa).

Glu12 functions as the Proton acceptor in the catalytic mechanism. Substrate contacts are provided by residues Gly78, Val152, and 173–174 (ME). Residue Asp197 is the Proton donor of the active site.

It belongs to the PNP/UDP phosphorylase family. MtnN subfamily. As to quaternary structure, homodimer.

The catalysed reaction is S-adenosyl-L-homocysteine + H2O = S-(5-deoxy-D-ribos-5-yl)-L-homocysteine + adenine. The enzyme catalyses S-methyl-5'-thioadenosine + H2O = 5-(methylsulfanyl)-D-ribose + adenine. It catalyses the reaction 5'-deoxyadenosine + H2O = 5-deoxy-D-ribose + adenine. It functions in the pathway amino-acid biosynthesis; L-methionine biosynthesis via salvage pathway; S-methyl-5-thio-alpha-D-ribose 1-phosphate from S-methyl-5'-thioadenosine (hydrolase route): step 1/2. Functionally, catalyzes the irreversible cleavage of the glycosidic bond in both 5'-methylthioadenosine (MTA) and S-adenosylhomocysteine (SAH/AdoHcy) to adenine and the corresponding thioribose, 5'-methylthioribose and S-ribosylhomocysteine, respectively. Also cleaves 5'-deoxyadenosine, a toxic by-product of radical S-adenosylmethionine (SAM) enzymes, into 5-deoxyribose and adenine. Thus, is required for in vivo function of the radical SAM enzymes biotin synthase and lipoic acid synthase, that are inhibited by 5'-deoxyadenosine accumulation. The chain is 5'-methylthioadenosine/S-adenosylhomocysteine nucleosidase from Buchnera aphidicola subsp. Acyrthosiphon pisum (strain 5A).